We begin with the raw amino-acid sequence, 492 residues long: GTPase Der (492 aa).

EngA-type G domains lie at P3 to E167 and I188 to A363. GTP contacts are provided by residues G9 to S16, D56 to F60, N119 to E122, G194 to S201, D241 to I245, and N306 to D309. The 85-residue stretch at Y364–T448 folds into the KH-like domain. The disordered stretch occupies residues V464–G492. Over residues K469–G492 the composition is skewed to basic residues.

Belongs to the TRAFAC class TrmE-Era-EngA-EngB-Septin-like GTPase superfamily. EngA (Der) GTPase family. As to quaternary structure, associates with the 50S ribosomal subunit.

In terms of biological role, GTPase that plays an essential role in the late steps of ribosome biogenesis. The chain is GTPase Der from Desulforapulum autotrophicum (strain ATCC 43914 / DSM 3382 / VKM B-1955 / HRM2) (Desulfobacterium autotrophicum).